Consider the following 148-residue polypeptide: MPKLLLLHGPNLNRLGTREPERYGRLTLQDIETRLRSICDAAGVQLCSAQSNHEGELIDRIHAAADEGVEFIVINPAALTHTSVGLRDALLAVALPFIEVHLSNVHAREAFRQHSYLSDIAEGVITGLGADGYDFAARAAIRRMGGQA.

The active-site Proton acceptor is Tyr23. Positions 75, 81, and 88 each coordinate substrate. The Proton donor role is filled by His101. Substrate-binding positions include 102–103 and Arg112; that span reads LS.

This sequence belongs to the type-II 3-dehydroquinase family. In terms of assembly, homododecamer.

The catalysed reaction is 3-dehydroquinate = 3-dehydroshikimate + H2O. The protein operates within metabolic intermediate biosynthesis; chorismate biosynthesis; chorismate from D-erythrose 4-phosphate and phosphoenolpyruvate: step 3/7. Functionally, catalyzes a trans-dehydration via an enolate intermediate. In Halorhodospira halophila (strain DSM 244 / SL1) (Ectothiorhodospira halophila (strain DSM 244 / SL1)), this protein is 3-dehydroquinate dehydratase.